The following is a 630-amino-acid chain: YTH domain-containing family protein 1 (630 aa).

3 disordered regions span residues 38–113 (DMTQ…YMQQ), 160–183 (YYPQ…AGPY), and 200–241 (QVGD…QSGH). Residues 70–102 (PGQQQQHQYGSPPNTNGNAQPMPQAHGNNTMNS) are compositionally biased toward polar residues. Residues 382 to 590 (EKYFILKSLT…SVGRKLTGLF (209 aa)) enclose the YTH domain.

The protein belongs to the YTHDF family. YTHDF1 subfamily.

The protein localises to the cytoplasm. It is found in the P-body. In terms of biological role, specifically recognizes and binds N6-methyladenosine (m6A)-containing mRNAs, and regulates their stability. M6A is a modification present at internal sites of mRNAs and some non-coding RNAs and plays a role in mRNA stability and processing. Plays a role in pathogenicity towards plant host. This Pyricularia oryzae (strain 70-15 / ATCC MYA-4617 / FGSC 8958) (Rice blast fungus) protein is YTH domain-containing family protein 1.